Consider the following 138-residue polypeptide: Putative transcriptional regulatory protein NedR (138 aa).

The interval 1–25 (MCWGRSWTFGRSSSKGWRPTSSASS) is disordered. Residues 9–25 (FGRSSSKGWRPTSSASS) are compositionally biased toward polar residues.

In terms of biological role, may serve as a transcriptional regulator. This Micromonospora viridifaciens protein is Putative transcriptional regulatory protein NedR (nedR).